The chain runs to 242 residues: LexA repressor (242 aa).

Residues 26–46 (FEEMKAALNLKSKSGIHRLIS) constitute a DNA-binding region (H-T-H motif). Active-site for autocatalytic cleavage activity residues include Ser163 and Lys201.

It belongs to the peptidase S24 family. Homodimer.

It catalyses the reaction Hydrolysis of Ala-|-Gly bond in repressor LexA.. Functionally, represses a number of genes involved in the response to DNA damage (SOS response), including recA and lexA. In the presence of single-stranded DNA, RecA interacts with LexA causing an autocatalytic cleavage which disrupts the DNA-binding part of LexA, leading to derepression of the SOS regulon and eventually DNA repair. The protein is LexA repressor of Granulibacter bethesdensis (strain ATCC BAA-1260 / CGDNIH1).